A 447-amino-acid polypeptide reads, in one-letter code: UPF0210 protein OEOE_0945 (447 aa).

It belongs to the UPF0210 family. Homodimer.

This is UPF0210 protein OEOE_0945 from Oenococcus oeni (strain ATCC BAA-331 / PSU-1).